The following is a 466-amino-acid chain: Phosphomethylpyrimidine synthase (466 aa).

Residues Asn-80, Met-109, Tyr-139, His-175, 195–197, 236–239, and Glu-275 each bind substrate; these read SRG and DSLR. Zn(2+) is bound at residue His-279. Tyr-302 is a binding site for substrate. Residue His-343 coordinates Zn(2+). [4Fe-4S] cluster-binding residues include Cys-423, Cys-426, and Cys-431.

Belongs to the ThiC family. [4Fe-4S] cluster is required as a cofactor.

The catalysed reaction is 5-amino-1-(5-phospho-beta-D-ribosyl)imidazole + S-adenosyl-L-methionine = 4-amino-2-methyl-5-(phosphooxymethyl)pyrimidine + CO + 5'-deoxyadenosine + formate + L-methionine + 3 H(+). The protein operates within cofactor biosynthesis; thiamine diphosphate biosynthesis. In terms of biological role, catalyzes the synthesis of the hydroxymethylpyrimidine phosphate (HMP-P) moiety of thiamine from aminoimidazole ribotide (AIR) in a radical S-adenosyl-L-methionine (SAM)-dependent reaction. This chain is Phosphomethylpyrimidine synthase, found in Synechococcus sp. (strain RCC307).